We begin with the raw amino-acid sequence, 431 residues long: Ribosomal RNA small subunit methyltransferase B (431 aa).

S-adenosyl-L-methionine contacts are provided by residues 254–260 (CAAPGGK), D277, D303, and D322. The Nucleophile role is filled by C375. The interval 398-417 (LHATGTPASPGQQNLPGPEE) is disordered. The segment covering 403–412 (TPASPGQQNL) has biased composition (polar residues).

It belongs to the class I-like SAM-binding methyltransferase superfamily. RsmB/NOP family.

The protein resides in the cytoplasm. It catalyses the reaction cytidine(967) in 16S rRNA + S-adenosyl-L-methionine = 5-methylcytidine(967) in 16S rRNA + S-adenosyl-L-homocysteine + H(+). In terms of biological role, specifically methylates the cytosine at position 967 (m5C967) of 16S rRNA. This Klebsiella pneumoniae (strain 342) protein is Ribosomal RNA small subunit methyltransferase B.